A 230-amino-acid chain; its full sequence is Ribonuclease HII (230 aa).

An RNase H type-2 domain is found at 28–217 (FRIAGIDEAG…VKEHLPSQPD (190 aa)). 3 residues coordinate a divalent metal cation: Asp-34, Glu-35, and Asp-126. The tract at residues 209–230 (KEHLPSQPDSDTAGPSTGLFSF) is disordered. A compositionally biased stretch (polar residues) spans 215 to 230 (QPDSDTAGPSTGLFSF).

Belongs to the RNase HII family. The cofactor is Mn(2+). Mg(2+) serves as cofactor.

The protein resides in the cytoplasm. It catalyses the reaction Endonucleolytic cleavage to 5'-phosphomonoester.. Its function is as follows. Endonuclease that specifically degrades the RNA of RNA-DNA hybrids. This Citrifermentans bemidjiense (strain ATCC BAA-1014 / DSM 16622 / JCM 12645 / Bem) (Geobacter bemidjiensis) protein is Ribonuclease HII.